We begin with the raw amino-acid sequence, 136 residues long: Large ribosomal subunit protein uL16 (136 aa).

This sequence belongs to the universal ribosomal protein uL16 family. Part of the 50S ribosomal subunit.

Binds 23S rRNA and is also seen to make contacts with the A and possibly P site tRNAs. This is Large ribosomal subunit protein uL16 from Shewanella loihica (strain ATCC BAA-1088 / PV-4).